The primary structure comprises 104 residues: Pyrimidine/purine nucleoside phosphorylase (104 aa).

It belongs to the nucleoside phosphorylase PpnP family.

The enzyme catalyses a purine D-ribonucleoside + phosphate = a purine nucleobase + alpha-D-ribose 1-phosphate. It catalyses the reaction adenosine + phosphate = alpha-D-ribose 1-phosphate + adenine. The catalysed reaction is cytidine + phosphate = cytosine + alpha-D-ribose 1-phosphate. It carries out the reaction guanosine + phosphate = alpha-D-ribose 1-phosphate + guanine. The enzyme catalyses inosine + phosphate = alpha-D-ribose 1-phosphate + hypoxanthine. It catalyses the reaction thymidine + phosphate = 2-deoxy-alpha-D-ribose 1-phosphate + thymine. The catalysed reaction is uridine + phosphate = alpha-D-ribose 1-phosphate + uracil. It carries out the reaction xanthosine + phosphate = alpha-D-ribose 1-phosphate + xanthine. Catalyzes the phosphorolysis of diverse nucleosides, yielding D-ribose 1-phosphate and the respective free bases. Can use uridine, adenosine, guanosine, cytidine, thymidine, inosine and xanthosine as substrates. Also catalyzes the reverse reactions. The chain is Pyrimidine/purine nucleoside phosphorylase from Geobacter sulfurreducens (strain ATCC 51573 / DSM 12127 / PCA).